The primary structure comprises 448 residues: Lipoamide acyltransferase component of branched-chain alpha-keto acid dehydrogenase complex, mitochondrial (448 aa).

The region spanning 30–105 (VVQFKLSDIG…RVGQALIDVE (76 aa)) is the Lipoyl-binding domain. An N6-lipoyllysine modification is found at Lys-71. 2 disordered regions span residues 108-146 (GNVEEPEQPKKEAASSSPEAPKSSAPKAPESAHSEGKVL) and 191-211 (TSGSTNIRTTHQAPQPSSKSY). The segment covering 121 to 136 (ASSSPEAPKSSAPKAP) has biased composition (low complexity). The Peripheral subunit-binding (PSBD) domain occupies 146–183 (LATPAVRRIAIENKIKLAEVRGTGKDGRVLKEDVLKFL). Polar residues predominate over residues 191-210 (TSGSTNIRTTHQAPQPSSKS). Residues Arg-257, Ser-272, Asp-315, Ser-365, Asn-366, Gly-390, and Ile-392 each coordinate CoA. Residues His-418 and Asp-422 contribute to the active site.

The protein belongs to the 2-oxoacid dehydrogenase family. (R)-lipoate serves as cofactor. Ubiquitously expressed.

The protein localises to the mitochondrion matrix. The protein resides in the cytoplasm. It is found in the cytosol. Its subcellular location is the cell projection. It localises to the dendrite. The protein localises to the cilium. It carries out the reaction N(6)-[(R)-dihydrolipoyl]-L-lysyl-[protein] + 2-methylpropanoyl-CoA = N(6)-[(R)-S(8)-2-methylpropanoyldihydrolipoyl]-L-lysyl-[protein] + CoA. In terms of biological role, the branched-chain alpha-keto dehydrogenase complex catalyzes the overall conversion of alpha-keto acids to acyl-CoA and CO(2). It contains multiple copies of three enzymatic components: branched-chain alpha-keto acid decarboxylase (E1), lipoamide acyltransferase (E2) and lipoamide dehydrogenase (E3). Within this complex, the catalytic function of this enzyme is to accept, and to transfer to coenzyme A, acyl groups that are generated by the branched-chain alpha-keto acid decarboxylase component. Required for the catabolism of branched-chain amino acids and the subsequent synthesis of monomethyl branched-chain fatty acids, which are important for regulating postembryonic growth. This is Lipoamide acyltransferase component of branched-chain alpha-keto acid dehydrogenase complex, mitochondrial from Caenorhabditis elegans.